We begin with the raw amino-acid sequence, 419 residues long: Inositol-tetrakisphosphate 1-kinase (419 aa).

K18 is a binding site for 1D-myo-inositol 1,3,4-trisphosphate. 2 residues coordinate ATP: R106 and K157. The ATP-grasp domain occupies 117 to 334; it reads EAYMKDDRIC…TGGAATEEVA (218 aa). 2 residues coordinate 1D-myo-inositol 1,3,4-trisphosphate: H167 and K199. ATP contacts are provided by residues 188–199, S214, S232, and S236; that span reads QNFINHNAVLYK. D281, D295, and N297 together coordinate Mg(2+). 1D-myo-inositol 1,3,4-trisphosphate is bound at residue N297. K388 is subject to N6-acetyllysine; by EP300 and CREBBP. Position 401 is a phosphoserine (S401). Position 415 is an N6-acetyllysine; by EP300 and CREBBP (K415).

Belongs to the ITPK1 family. In terms of assembly, monomer. Interacts with GPS1/COPS1. Mg(2+) is required as a cofactor. In terms of processing, acetylation by EP300 and CREBBP destabilizes ITPK1, and down-regulates enzymatic activity. Deacetylated by SIRT1.

It carries out the reaction 1D-myo-inositol 3,4,5,6-tetrakisphosphate + ATP = 1D-myo-inositol 1,3,4,5,6-pentakisphosphate + ADP + H(+). The catalysed reaction is 1D-myo-inositol 1,3,4-trisphosphate + ATP = 1D-myo-inositol 1,3,4,5-tetrakisphosphate + ADP + H(+). The enzyme catalyses 1D-myo-inositol 1,3,4-trisphosphate + ATP = 1D-myo-inositol 1,3,4,6-tetrakisphosphate + ADP + H(+). It catalyses the reaction 1D-myo-inositol 3,4,6-trisphosphate + ATP = 1D-myo-inositol 1,3,4,6-tetrakisphosphate + ADP + H(+). It carries out the reaction 1D-myo-inositol 1,3,4-trisphosphate + 1D-myo-inositol 1,3,4,5,6-pentakisphosphate = 1D-myo-inositol 3,4,5,6-tetrakisphosphate + 1D-myo-inositol 1,3,4,6-tetrakisphosphate. The catalysed reaction is 1D-myo-inositol 1,3,4-trisphosphate + 1D-myo-inositol 1,3,4,5,6-pentakisphosphate = 1D-myo-inositol 3,4,5,6-tetrakisphosphate + 1D-myo-inositol 1,3,4,5-tetrakisphosphate. Functionally, kinase that can phosphorylate various inositol polyphosphate such as Ins(3,4,5,6)P4 or Ins(1,3,4)P3. Phosphorylates Ins(3,4,5,6)P4 at position 1 to form Ins(1,3,4,5,6)P5. This reaction is thought to have regulatory importance, since Ins(3,4,5,6)P4 is an inhibitor of plasma membrane Ca(2+)-activated Cl(-) channels, while Ins(1,3,4,5,6)P5 is not. Also phosphorylates Ins(1,3,4)P3 on O-5 and O-6 to form Ins(1,3,4,6)P4, an essential molecule in the hexakisphosphate (InsP6) pathway. Also acts as an inositol polyphosphate phosphatase that dephosphorylates Ins(1,3,4,5)P4 and Ins(1,3,4,6)P4 to Ins(1,3,4)P3, and Ins(1,3,4,5,6)P5 to Ins(3,4,5,6)P4. May also act as an isomerase that interconverts the inositol tetrakisphosphate isomers Ins(1,3,4,5)P4 and Ins(1,3,4,6)P4 in the presence of ADP and magnesium. Probably acts as the rate-limiting enzyme of the InsP6 pathway. Modifies TNF-alpha-induced apoptosis by interfering with the activation of TNFRSF1A-associated death domain. Plays an important role in MLKL-mediated necroptosis. Produces highly phosphorylated inositol phosphates such as inositolhexakisphosphate (InsP6) which bind to MLKL mediating the release of an N-terminal auto-inhibitory region leading to its activation. Essential for activated phospho-MLKL to oligomerize and localize to the cell membrane during necroptosis. In Mus musculus (Mouse), this protein is Inositol-tetrakisphosphate 1-kinase.